A 201-amino-acid polypeptide reads, in one-letter code: 3-isopropylmalate dehydratase small subunit (201 aa).

This sequence belongs to the LeuD family. LeuD type 1 subfamily. Heterodimer of LeuC and LeuD.

The enzyme catalyses (2R,3S)-3-isopropylmalate = (2S)-2-isopropylmalate. The protein operates within amino-acid biosynthesis; L-leucine biosynthesis; L-leucine from 3-methyl-2-oxobutanoate: step 2/4. Catalyzes the isomerization between 2-isopropylmalate and 3-isopropylmalate, via the formation of 2-isopropylmaleate. In Shigella dysenteriae serotype 1 (strain Sd197), this protein is 3-isopropylmalate dehydratase small subunit.